The sequence spans 210 residues: ATP-dependent Clp protease proteolytic subunit (210 aa).

Catalysis depends on serine 106, which acts as the Nucleophile. Histidine 131 is an active-site residue.

Belongs to the peptidase S14 family. In terms of assembly, fourteen ClpP subunits assemble into 2 heptameric rings which stack back to back to give a disk-like structure with a central cavity, resembling the structure of eukaryotic proteasomes.

Its subcellular location is the cytoplasm. The catalysed reaction is Hydrolysis of proteins to small peptides in the presence of ATP and magnesium. alpha-casein is the usual test substrate. In the absence of ATP, only oligopeptides shorter than five residues are hydrolyzed (such as succinyl-Leu-Tyr-|-NHMec, and Leu-Tyr-Leu-|-Tyr-Trp, in which cleavage of the -Tyr-|-Leu- and -Tyr-|-Trp bonds also occurs).. Its function is as follows. Cleaves peptides in various proteins in a process that requires ATP hydrolysis. Has a chymotrypsin-like activity. Plays a major role in the degradation of misfolded proteins. The sequence is that of ATP-dependent Clp protease proteolytic subunit from Bartonella quintana (strain Toulouse) (Rochalimaea quintana).